An 843-amino-acid chain; its full sequence is Protein P (843 aa).

Positions 1–177 (MPLSYPHFRK…FCGSPYSWEQ (177 aa)) are terminal protein domain (TP). The interval 178–346 (ELQHGSTSLN…YCLSHIINLL (169 aa)) is spacer. Disordered stretches follow at residues 228 to 259 (KQGQ…GVEP) and 283 to 314 (EKAN…SVGS). The segment covering 239–249 (RSGRLRSRVHT) has biased composition (basic residues). Residues 347-690 (EDWGPCYEHG…YMNLYPVARQ (344 aa)) form a polymerase/reverse transcriptase domain (RT) region. The 244-residue stretch at 357-600 (QHYIRTPRTP…YSLHFMGYVI (244 aa)) folds into the Reverse transcriptase domain. Mg(2+) contacts are provided by Asp429, Asp551, and Asp552.

Belongs to the hepadnaviridae P protein family.

It carries out the reaction DNA(n) + a 2'-deoxyribonucleoside 5'-triphosphate = DNA(n+1) + diphosphate. The enzyme catalyses Endonucleolytic cleavage to 5'-phosphomonoester.. With respect to regulation, activated by host HSP70 and HSP40 in vitro to be able to bind the epsilon loop of the pgRNA. Because deletion of the RNase H region renders the protein partly chaperone-independent, the chaperones may be needed indirectly to relieve occlusion of the RNA-binding site by this domain. Inhibited by several reverse-transcriptase inhibitors: Lamivudine, Adefovir and Entecavir. Multifunctional enzyme that converts the viral RNA genome into dsDNA in viral cytoplasmic capsids. This enzyme displays a DNA polymerase activity that can copy either DNA or RNA templates, and a ribonuclease H (RNase H) activity that cleaves the RNA strand of RNA-DNA heteroduplexes in a partially processive 3'- to 5'-endonucleasic mode. Neo-synthesized pregenomic RNA (pgRNA) are encapsidated together with the P protein, and reverse-transcribed inside the nucleocapsid. Initiation of reverse-transcription occurs first by binding the epsilon loop on the pgRNA genome, and is initiated by protein priming, thereby the 5'-end of (-)DNA is covalently linked to P protein. Partial (+)DNA is synthesized from the (-)DNA template and generates the relaxed circular DNA (RC-DNA) genome. After budding and infection, the RC-DNA migrates in the nucleus, and is converted into a plasmid-like covalently closed circular DNA (cccDNA). The activity of P protein does not seem to be necessary for cccDNA generation, and is presumably released from (+)DNA by host nuclear DNA repair machinery. This is Protein P from Homo sapiens (Human).